A 211-amino-acid polypeptide reads, in one-letter code: Protein-methionine-sulfoxide reductase heme-binding subunit MsrQ (211 aa).

4 consecutive transmembrane segments (helical) span residues 10–30, 82–102, 116–136, and 153–173; these read WLKV…VWAI, LWCF…ELGV, PYLT…FTST, and FVYL…KIIS.

It belongs to the MsrQ family. In terms of assembly, heterodimer of a catalytic subunit (MsrP) and a heme-binding subunit (MsrQ). FMN is required as a cofactor. It depends on heme b as a cofactor.

Its subcellular location is the cell inner membrane. Part of the MsrPQ system that repairs oxidized periplasmic proteins containing methionine sulfoxide residues (Met-O), using respiratory chain electrons. Thus protects these proteins from oxidative-stress damage caused by reactive species of oxygen and chlorine generated by the host defense mechanisms. MsrPQ is essential for the maintenance of envelope integrity under bleach stress, rescuing a wide series of structurally unrelated periplasmic proteins from methionine oxidation, including the primary periplasmic chaperone SurA and the lipoprotein Pal. MsrQ provides electrons for reduction to the reductase catalytic subunit MsrP, using the quinone pool of the respiratory chain. The sequence is that of Protein-methionine-sulfoxide reductase heme-binding subunit MsrQ from Shigella dysenteriae serotype 1 (strain Sd197).